Reading from the N-terminus, the 430-residue chain is Replication protein A 32 kDa subunit C (430 aa).

The disordered stretch occupies residues 14–46 (MPSQRSGAPAPEYSAAGTGAAAAPSPSKPRDPR). Residues 23-38 (APEYSAAGTGAAAAPS) are compositionally biased toward low complexity. Residues 86-160 (VRVLGRVVSV…QGLARSIRPI (75 aa)) constitute a DNA-binding region (OB).

The protein belongs to the replication factor A protein 2 family. As to quaternary structure, heterotrimer of RPA1, RPA2 and RPA3 (canonical replication protein A complex). Interacts with RPA1C and RPA3. Phosphorylated in a cell-cycle-dependent manner (from the S phase until mitosis). In response to DNA damage, recruited to DNA-repair nuclear foci, as a hypophosphorylated form.

Its subcellular location is the nucleus. Its function is as follows. Component of the replication protein A complex (RPA) required for DNA recombination, repair and replication. The activity of RPA is mediated by single-stranded DNA binding and protein interactions. The sequence is that of Replication protein A 32 kDa subunit C (RPA2C) from Oryza sativa subsp. japonica (Rice).